The sequence spans 312 residues: MNNKHNLALAEQYDQKPLIKTSMLPEVGASQWHAFLTLGFSKTARGTVLKTSDHKGPLYVQKPFYPEGRDTAHIYLLHPPGGLVSGDRLTITANLAENTHVLITTPGAGRVYRARKDKTLQHQITQLNVAENSLMEWLPQETILYPNAHTRLENRIHLANNAKFIGWEITCFGLPANQEDFAQGHAEQGFEIRQNGRLKVRERLVIDDSSRTIFAAKAGLAGKPINGLMIAGPFDLTNASHSASHDELIDSLRKHCAQHNSVSGVSLVGEYIFVRSLHHDSEQVKQLFIQCWREIRPALINKESNEPRIWAT.

Belongs to the UreD family. As to quaternary structure, ureD, UreF and UreG form a complex that acts as a GTP-hydrolysis-dependent molecular chaperone, activating the urease apoprotein by helping to assemble the nickel containing metallocenter of UreC. The UreE protein probably delivers the nickel.

It is found in the cytoplasm. Required for maturation of urease via the functional incorporation of the urease nickel metallocenter. This is Urease accessory protein UreD from Marinomonas sp. (strain MWYL1).